Consider the following 346-residue polypeptide: Probable dual-specificity RNA methyltransferase RlmN (346 aa).

Glu-90 acts as the Proton acceptor in catalysis. The 235-residue stretch at 96-330 folds into the Radical SAM core domain; that stretch reads TRDRLTVCVS…VSVRASRGLD (235 aa). A disulfide bridge connects residues Cys-103 and Cys-335. The [4Fe-4S] cluster site is built by Cys-110, Cys-114, and Cys-117. S-adenosyl-L-methionine-binding positions include 157-158, Ser-187, 216-218, and Asn-292; these read GE and SLH. Cys-335 acts as the S-methylcysteine intermediate in catalysis.

The protein belongs to the radical SAM superfamily. RlmN family. The cofactor is [4Fe-4S] cluster.

The protein localises to the cytoplasm. It carries out the reaction adenosine(2503) in 23S rRNA + 2 reduced [2Fe-2S]-[ferredoxin] + 2 S-adenosyl-L-methionine = 2-methyladenosine(2503) in 23S rRNA + 5'-deoxyadenosine + L-methionine + 2 oxidized [2Fe-2S]-[ferredoxin] + S-adenosyl-L-homocysteine. It catalyses the reaction adenosine(37) in tRNA + 2 reduced [2Fe-2S]-[ferredoxin] + 2 S-adenosyl-L-methionine = 2-methyladenosine(37) in tRNA + 5'-deoxyadenosine + L-methionine + 2 oxidized [2Fe-2S]-[ferredoxin] + S-adenosyl-L-homocysteine. Specifically methylates position 2 of adenine 2503 in 23S rRNA and position 2 of adenine 37 in tRNAs. This Synechococcus sp. (strain RCC307) protein is Probable dual-specificity RNA methyltransferase RlmN.